The following is a 261-amino-acid chain: MDISCEIEECKTREQQNSKRSAKACWGTVFSDLGALMSIALPMLMYFTFTKNDFDTSPLLKVVMLLFPCSYSAAGYFLLCYSSRTAHHKTGILYHLLNVLLVTFAAISILSIIVLPIEKWSKRLLGVYSMPSSSFVVSLTYLLYTSCDLTTASFTDTGITAFVELLSLLFLMSYPIFLTRNPEYYPYLSIISAILILARSFKEKYFPNKKTSESVVRWRLLIFFVILGFTTFSYIMAGLSCLHIIKEKCENFAGNQQILNK.

Belongs to the UPF0328 family.

This chain is UPF0328 protein ECU03_1620, found in Encephalitozoon cuniculi (strain GB-M1) (Microsporidian parasite).